The following is a 59-amino-acid chain: Photosystem II reaction center protein K (59 aa).

The propeptide occupies 1-22 (MLNIFSLICLNSDLYSSRFFLA). Residues 38–58 (MPVIPLFFLLLAFVWQAAVSF) form a helical membrane-spanning segment.

This sequence belongs to the PsbK family. As to quaternary structure, PSII is composed of 1 copy each of membrane proteins PsbA, PsbB, PsbC, PsbD, PsbE, PsbF, PsbH, PsbI, PsbJ, PsbK, PsbL, PsbM, PsbT, PsbX, PsbY, PsbZ, Psb30/Ycf12, at least 3 peripheral proteins of the oxygen-evolving complex and a large number of cofactors. It forms dimeric complexes.

The protein localises to the plastid. It localises to the chloroplast thylakoid membrane. Its function is as follows. One of the components of the core complex of photosystem II (PSII). PSII is a light-driven water:plastoquinone oxidoreductase that uses light energy to abstract electrons from H(2)O, generating O(2) and a proton gradient subsequently used for ATP formation. It consists of a core antenna complex that captures photons, and an electron transfer chain that converts photonic excitation into a charge separation. This chain is Photosystem II reaction center protein K, found in Oenothera elata subsp. hookeri (Hooker's evening primrose).